The chain runs to 230 residues: uncharacterized protein (230 aa).

A divalent metal cation-binding residues include Glu-74, Glu-76, and Asp-105.

The protein belongs to the FAH family.

This is an uncharacterized protein from Pyrococcus horikoshii (strain ATCC 700860 / DSM 12428 / JCM 9974 / NBRC 100139 / OT-3).